The following is a 312-amino-acid chain: MSAPGADFDTERDLRAAQKAEVLVQALPWLERFAGAVVVIKFGGNAMIDADLEAAFADDVLFLRRVGLKPVVVHGGGPQITQMLAKLEITSEFRGGLRVTTPEAMDVVRMVLTGQVQRRLVTMLNARGPLAVGLSGEDAGLFRAQRRSAVVDGEPVDVGLVGDVSRVDPLAVADLLDAGRIPVVSTIATDEADPTQILNVNADTAASALAVALGATKLVVLTDVEGLYSAWPDRSSLVSLISAAELEAMLPGLDAGMVPKMEACLRAVRGGVPQAHVIDGRAPHALLLEVFTTEGVGTMVLPDEAAAGASSE.

Substrate is bound by residues 76–77 (GG), arginine 98, and asparagine 199.

Belongs to the acetylglutamate kinase family. ArgB subfamily.

Its subcellular location is the cytoplasm. The catalysed reaction is N-acetyl-L-glutamate + ATP = N-acetyl-L-glutamyl 5-phosphate + ADP. It functions in the pathway amino-acid biosynthesis; L-arginine biosynthesis; N(2)-acetyl-L-ornithine from L-glutamate: step 2/4. Functionally, catalyzes the ATP-dependent phosphorylation of N-acetyl-L-glutamate. The chain is Acetylglutamate kinase from Beutenbergia cavernae (strain ATCC BAA-8 / DSM 12333 / CCUG 43141 / JCM 11478 / NBRC 16432 / NCIMB 13614 / HKI 0122).